The chain runs to 628 residues: DNA-directed RNA polymerase subunit gamma (628 aa).

Positions 71, 73, 86, and 89 each coordinate Zn(2+). Mg(2+)-binding residues include D467, D469, and D471.

This sequence belongs to the RNA polymerase beta' chain family. RpoC1 subfamily. As to quaternary structure, in cyanobacteria the RNAP catalytic core is composed of 2 alpha, 1 beta, 1 beta', 1 gamma and 1 omega subunit. When a sigma factor is associated with the core the holoenzyme is formed, which can initiate transcription. Mg(2+) serves as cofactor. The cofactor is Zn(2+).

It catalyses the reaction RNA(n) + a ribonucleoside 5'-triphosphate = RNA(n+1) + diphosphate. In terms of biological role, DNA-dependent RNA polymerase catalyzes the transcription of DNA into RNA using the four ribonucleoside triphosphates as substrates. The chain is DNA-directed RNA polymerase subunit gamma from Crocosphaera subtropica (strain ATCC 51142 / BH68) (Cyanothece sp. (strain ATCC 51142)).